A 587-amino-acid polypeptide reads, in one-letter code: Solute carrier family 13 member 2 (587 aa).

4 consecutive transmembrane segments (helical) span residues Phe-13–Thr-33, Ala-53–Met-73, Thr-86–His-106, and Ser-136–Leu-156. Residues Lys-188 to Glu-208 are disordered. Helical transmembrane passes span Phe-264–Phe-284, Val-329–Trp-349, Thr-367–Met-387, Thr-407–Ala-427, Pro-445–Phe-465, Leu-477–Met-497, Leu-506–Leu-526, and Gly-535–Ile-555.

It belongs to the SLC13A/DASS transporter (TC 2.A.47) family. NADC subfamily. Expressed in large and small intestine and in the kidney proximal tubules.

It localises to the apical cell membrane. The enzyme catalyses succinate(out) + 3 Na(+)(out) = succinate(in) + 3 Na(+)(in). It carries out the reaction fumarate(out) + 3 Na(+)(out) = fumarate(in) + 3 Na(+)(in). It catalyses the reaction 2-oxoglutarate(out) + 3 Na(+)(out) = 2-oxoglutarate(in) + 3 Na(+)(in). Its activity is regulated as follows. Li(+) decreases succinate transport in the presence of Na(+), by competing at one of the three cation binding sites. Low-affinity sodium-dicarboxylate cotransporter, that mediates the entry of citric acid cycle intermediates, such as succinate, citrate, fumarate and alpha-ketoglutarate (2-oxoglutarate) into the small intestine and renal proximal tubule. Transports the dicarboxylate into the cell with a probable stoichiometry of 3 Na(+) for 1 divalent dicarboxylate, rendering the process electrogenic. Citrate is transported in protonated form as a divalent anion, rather than the trivalent form which is normally found in blood. Has a critical role in renal dicarboxylate transport. The chain is Solute carrier family 13 member 2 (Slc13a2) from Rattus norvegicus (Rat).